The primary structure comprises 170 residues: Bifunctional protein PyrR (170 aa).

Positions 90–102 match the PRPP-binding motif; sequence LVLVDDVLMSGRT.

Belongs to the purine/pyrimidine phosphoribosyltransferase family. PyrR subfamily.

It catalyses the reaction UMP + diphosphate = 5-phospho-alpha-D-ribose 1-diphosphate + uracil. Its function is as follows. Regulates the transcription of the pyrimidine nucleotide (pyr) operon in response to exogenous pyrimidines. In terms of biological role, also displays a weak uracil phosphoribosyltransferase activity which is not physiologically significant. The polypeptide is Bifunctional protein PyrR (Pseudomonas paraeruginosa (strain DSM 24068 / PA7) (Pseudomonas aeruginosa (strain PA7))).